Reading from the N-terminus, the 445-residue chain is Proline--tRNA ligase (445 aa).

This sequence belongs to the class-II aminoacyl-tRNA synthetase family. ProS type 2 subfamily. In terms of assembly, homodimer.

It is found in the cytoplasm. The catalysed reaction is tRNA(Pro) + L-proline + ATP = L-prolyl-tRNA(Pro) + AMP + diphosphate. Its function is as follows. Catalyzes the attachment of proline to tRNA(Pro) in a two-step reaction: proline is first activated by ATP to form Pro-AMP and then transferred to the acceptor end of tRNA(Pro). The chain is Proline--tRNA ligase from Cereibacter sphaeroides (strain ATCC 17025 / ATH 2.4.3) (Rhodobacter sphaeroides).